The sequence spans 65 residues: Muscarinic m1-toxin2 (65 aa).

4 disulfide bridges follow: C3–C24, C17–C42, C46–C57, and C58–C63.

It belongs to the three-finger toxin family. Short-chain subfamily. Aminergic toxin sub-subfamily. In terms of assembly, monomer. As to expression, expressed by the venom gland.

It localises to the secreted. Its function is as follows. Binds irreversibly and specifically to M1 (CHRM1) muscarinic acetylcholine receptors, blocking further binding of antagonists and preventing the action of agonists. The protein is Muscarinic m1-toxin2 of Dendroaspis angusticeps (Eastern green mamba).